Reading from the N-terminus, the 592-residue chain is Frizzled-9 (592 aa).

Positions 1 to 23 are cleaved as a signal peptide; sequence MAVPPLLRGALLLWQLLATGGAA. Residues 24–230 lie on the Extracellular side of the membrane; sequence LEIGRFDPER…EVFWSRRDKD (207 aa). Positions 35–156 constitute an FZ domain; that stretch reads RGPAPCQAME…NDPHALCMEA (122 aa). 5 cysteine pairs are disulfide-bonded: Cys-40–Cys-101, Cys-48–Cys-94, Cys-85–Cys-123, Cys-112–Cys-153, and Cys-116–Cys-140. N-linked (GlcNAc...) asparagine glycosylation is present at Asn-54. Residues 59-173 are required for Wnt-activated receptor activity; the sequence is PNLLGHTSQG…PTEPHKGLGM (115 aa). A glycan (N-linked (GlcNAc...) asparagine) is linked at Asn-159. Residues 231–251 traverse the membrane as a helical segment; that stretch reads FALVWMAVWSALCFFSTAFTV. The Cytoplasmic segment spans residues 252–267; sequence FTFLLEPHRFQYPERP. The chain crosses the membrane as a helical span at residues 268-288; sequence IIFLSMCYNVYSLAFLIRAVA. The Extracellular portion of the chain corresponds to 289-316; the sequence is GAQSVACDQEAGALYVIQEGLENTGCTL. Residues 317 to 337 form a helical membrane-spanning segment; it reads VFLLLYYFGMASSLWWVVLTL. Topologically, residues 338 to 356 are cytoplasmic; that stretch reads TWFLAAGKKWGHEAIEAHG. A helical transmembrane segment spans residues 357-377; sequence SYFHMAAWGLPALKTIVVLTL. The Extracellular segment spans residues 378–401; that stretch reads RKVAGDELTGLCYVASMDPAALTG. Residues 402 to 422 form a helical membrane-spanning segment; the sequence is FVLVPLSCYLVLGTSFLLTGF. Over 423 to 448 the chain is Cytoplasmic; that stretch reads VALFHIRKIMKTGGTNTEKLEKLMVK. The chain crosses the membrane as a helical span at residues 449 to 469; the sequence is IGVFSILYTVPATCVIVCYVY. At 470-509 the chain is on the extracellular side; it reads ERLNMDFWRLRATEQPCTAATVPGGRRDCSLPGGSVPTVA. Residues 510–530 form a helical membrane-spanning segment; the sequence is VFMLKIFMSLVVGITSGVWVW. Residues 531-592 are Cytoplasmic-facing; it reads SSKTFQTWQS…DPSLENPTHL (62 aa). Positions 533–538 match the Lys-Thr-X-X-X-Trp motif, mediates interaction with the PDZ domain of Dvl family members motif; sequence KTFQTW. Residues 555 to 592 are required for CTNNB1 accumulation and TCF transcription factor activity; that stretch reads ACRTPGGYGRGTHCHYKAPTVVLHMTKTDPSLENPTHL.

The protein belongs to the G-protein coupled receptor Fz/Smo family. In terms of processing, ubiquitinated by ZNRF3, leading to its degradation by the proteasome. In the embryo, found in the neural tube, trunk skeletal muscle precursors (myotomes), limb skeletal anlagen, craniofacial regions and nephric ducts. In the adult, expression is abundant in heart, brain, testis and skeletal muscle. In the testis, expressed in all spermatogenic cell types. Lower levels in adult lung, liver and kidney. Barely detectable in spleen. Expressed also in chondrocytes.

The protein resides in the cell membrane. In terms of biological role, receptor for WNT2 that is coupled to the beta-catenin canonical signaling pathway, which leads to the activation of disheveled proteins, inhibition of GSK-3 kinase, nuclear accumulation of beta-catenin and activation of Wnt target genes. Plays a role in neuromuscular junction (NMJ) assembly by negatively regulating the clustering of acetylcholine receptors (AChR) through the beta-catenin canonical signaling pathway. May play a role in neural progenitor cells (NPCs) viability through the beta-catenin canonical signaling pathway by negatively regulating cell cycle arrest leading to inhibition of neuron apoptotic process. During hippocampal development, regulates neuroblast proliferation and apoptotic cell death. Controls bone formation through non canonical Wnt signaling mediated via ISG15. Positively regulates bone regeneration through non canonical Wnt signaling. In Mus musculus (Mouse), this protein is Frizzled-9 (Fzd9).